Reading from the N-terminus, the 118-residue chain is Large ribosomal subunit protein uL18 (118 aa).

The protein belongs to the universal ribosomal protein uL18 family. In terms of assembly, part of the 50S ribosomal subunit; part of the 5S rRNA/L5/L18/L25 subcomplex. Contacts the 5S and 23S rRNAs.

In terms of biological role, this is one of the proteins that bind and probably mediate the attachment of the 5S RNA into the large ribosomal subunit, where it forms part of the central protuberance. The chain is Large ribosomal subunit protein uL18 from Campylobacter jejuni subsp. doylei (strain ATCC BAA-1458 / RM4099 / 269.97).